The chain runs to 629 residues: tRNA uridine 5-carboxymethylaminomethyl modification enzyme MnmG (629 aa).

FAD is bound at residue 14-19 (GAGHAG). 274–288 (GPRYCPSIEDKVVRF) is an NAD(+) binding site.

It belongs to the MnmG family. As to quaternary structure, homodimer. Heterotetramer of two MnmE and two MnmG subunits. It depends on FAD as a cofactor.

The protein resides in the cytoplasm. NAD-binding protein involved in the addition of a carboxymethylaminomethyl (cmnm) group at the wobble position (U34) of certain tRNAs, forming tRNA-cmnm(5)s(2)U34. The sequence is that of tRNA uridine 5-carboxymethylaminomethyl modification enzyme MnmG from Xylella fastidiosa (strain 9a5c).